We begin with the raw amino-acid sequence, 156 residues long: MSSNKINKKSIARIAAVQAIYQNILQNNDDMDDIMQNVLSFYRNDSSITNLTGNLKISLSISHFKILVKSVFENINKLDEIIDNHLTNDKDPAHMPILLRALLRAGIYELLFYPTTPAKVVINEYTDIANDMLNGYEIGFVNSVLDTIAKEKNKIS.

It belongs to the NusB family.

Involved in transcription antitermination. Required for transcription of ribosomal RNA (rRNA) genes. Binds specifically to the boxA antiterminator sequence of the ribosomal RNA (rrn) operons. This is Transcription antitermination protein NusB from Rickettsia akari (strain Hartford).